Reading from the N-terminus, the 845-residue chain is Receptor-like protein Cf-9 homolog (845 aa).

Positions 1 to 19 (MGCVKLVFFMLLKLDLLEF) are cleaved as a signal peptide. The interval 20-70 (KNMFTVNPNASDYCYDYTDQRMQSYPRTLFWNKSTDCCSWDGIHCDETTGQ) is N-cap. Residues 20-794 (KNMFTVNPNA…EEDSPMISWQ (775 aa)) lie on the Extracellular side of the membrane. 3 N-linked (GlcNAc...) asparagine glycosylation sites follow: Asn28, Asn51, and Asn88. The LRR 1; degenerate repeat unit spans residues 71–94 (VVELDLRCSQLQGKFHSNSSLFQL). LRR repeat units lie at residues 95–118 (SNLK…KFGE), 119–143 (FSDL…ISHL), 144–171 (SKLH…LKNL), 172–193 (TQLR…SNFS), 194–217 (SHLT…VFHL), 219–242 (DLEF…KWNS), 244–266 (ASLM…SFSH), 267–291 (LTSL…LWNL), 292–316 (TNIE…RFEK), 318–338 (KRLS…SFNR), 340–364 (WTQL…VSGL), 365–388 (QNLG…IFSL), 390–410 (SLVV…EFKS), 411–434 (KTLS…LLNQ), 436–458 (SLQF…ICNL), 459–482 (KTLM…VGER), 484–506 (EYLL…TFSI), 507–531 (GNSF…LINC), 532–554 (KYLK…WLGY), 555–579 (LSQL…GSTN), 581–605 (FMRL…ILGN), 649–672 (LDSN…IIGD), 673–696 (LVGL…SFQN), 698–721 (SVLE…LASL), and 723–741 (FLEV…IPKG). N-linked (GlcNAc...) asparagine glycans are attached at residues Asn131, Asn170, Asn183, and Asn191. Residue Asn241 is glycosylated (N-linked (GlcNAc...) asparagine). N-linked (GlcNAc...) asparagine glycosylation is found at Asn279 and Asn290. Asn337, Asn360, Asn378, and Asn398 each carry an N-linked (GlcNAc...) asparagine glycan. N-linked (GlcNAc...) asparagine glycosylation occurs at Asn446. An N-linked (GlcNAc...) asparagine glycan is attached at Asn501. Asn545 is a glycosylation site (N-linked (GlcNAc...) asparagine). N-linked (GlcNAc...) asparagine glycans are attached at residues Asn656, Asn680, and Asn696. Asn728 and Asn749 each carry an N-linked (GlcNAc...) asparagine glycan. A C-cap/acidic domain region spans residues 742-794 (KQFDSFGNTSYQGNDGLRGFPLSKLCGVDDQVTTPAELDQEEEEEDSPMISWQ). The helical transmembrane segment at 795–815 (GVLVGYGCGLVIGLSVIYIMW) threads the bilayer. At 816-845 (STQYPAWFSRMDLKLEHIITTRMKKHKKRY) the chain is on the cytoplasmic side.

The protein belongs to the RLP family.

The protein resides in the cell membrane. At the opposite of its homolog Cf-9 found in S.pimpinellifolium, was not able to confer resistance to the fungal pathogen C.fulvum. In Solanum lycopersicum (Tomato), this protein is Receptor-like protein Cf-9 homolog.